The chain runs to 459 residues: Putrescine aminotransferase (459 aa).

Residues glycine 150 to threonine 151 and glutamine 274 each bind pyridoxal 5'-phosphate. Lysine 300 carries the N6-(pyridoxal phosphate)lysine modification. Pyridoxal 5'-phosphate is bound at residue threonine 332.

Belongs to the class-III pyridoxal-phosphate-dependent aminotransferase family. Putrescine aminotransferase subfamily. Requires pyridoxal 5'-phosphate as cofactor.

It catalyses the reaction an alkane-alpha,omega-diamine + 2-oxoglutarate = an omega-aminoaldehyde + L-glutamate. The catalysed reaction is putrescine + 2-oxoglutarate = 1-pyrroline + L-glutamate + H2O. The enzyme catalyses cadaverine + 2-oxoglutarate = 5-aminopentanal + L-glutamate. The protein operates within amine and polyamine degradation; putrescine degradation; 4-aminobutanal from putrescine (transaminase route): step 1/1. Functionally, catalyzes the aminotransferase reaction from putrescine to 2-oxoglutarate, leading to glutamate and 4-aminobutanal, which spontaneously cyclizes to form 1-pyrroline. This is the first step in one of two pathways for putrescine degradation, where putrescine is converted into 4-aminobutanoate (gamma-aminobutyrate or GABA) via 4-aminobutanal. Also functions as a cadaverine transaminase in a a L-lysine degradation pathway to succinate that proceeds via cadaverine, glutarate and L-2-hydroxyglutarate. The polypeptide is Putrescine aminotransferase (Escherichia coli O6:H1 (strain CFT073 / ATCC 700928 / UPEC)).